The following is a 571-amino-acid chain: MIETSKRSRIINKINNVVISDYKGAIFVWGPKSTGKYTTIKHVLESNSRIYCEADCNEHYSTASLFRSLLSTLRNINKFGRRKPINYDDDDEYINNDINKDNEEDNNNNNNNNNNNNNNNNNNNNNNNNNNNDGYDDGYDDDYDYKDKSLNERIELLKINDLSKEFNNMIIKSQIYSKKIPATSIPSVSEMVQVLYEKASTNETISIILRHSEKLMKFEGEFFYSLFKIEEFTDHPVCLYLLSEIPTERILSTGKEFKPIRNIHFPQYEPNEICSIVLNFKPNFSIINYNQNNNDSNNSNNNNNNNNHLKLKEEDNIKLYNKLVELVVRVFHTTTRDIIDIIFVCHNLFPNYIEPIYNGTCGVEDSDSILYQNIESKIVKSLRNITEKDEIVLEDQKRQQETYQIYPPQQVPQQQKQQEKEKEKEKGRQLASYSDAKNIPYHMKIVLISCFLASSFSRNKDKLLYTKEAVKRQSLSNEKTTGSKWFHFQRAREIGYKLFPSEKKALFQESIFKSLASLKYLETISSIEPAFTYKFKCTRRVHLEFIKQISASINFKIDTYLEAAQFQIISK.

Disordered stretches follow at residues 90–142 (DDEY…YDDD) and 404–430 (QIYP…GRQL). 2 stretches are compositionally biased toward low complexity: residues 107–133 (NNNN…NNND) and 407–416 (PPQQVPQQQK). Over residues 417–428 (QQEKEKEKEKGR) the composition is skewed to basic and acidic residues.

It belongs to the ORC1 family. In terms of assembly, ORC is composed of six subunits.

The protein localises to the nucleus. Functionally, component of the origin recognition complex (ORC) that binds origins of replication. DNA-binding is ATP-dependent, however specific DNA sequences that define origins of replication have not been identified so far. ORC is required to assemble the pre-replication complex necessary to initiate DNA replication. The sequence is that of Origin recognition complex subunit 5 (orcE) from Dictyostelium discoideum (Social amoeba).